Consider the following 943-residue polypeptide: Isoleucine--tRNA ligase (943 aa).

Positions 58–68 (PYANGKIHIGH) match the 'HIGH' region motif. Glu-567 is an L-isoleucyl-5'-AMP binding site. The 'KMSKS' region signature appears at 608-612 (KMSKS). Lys-611 is an ATP binding site. Residues Cys-906, Cys-909, Cys-926, and Cys-929 each coordinate Zn(2+).

This sequence belongs to the class-I aminoacyl-tRNA synthetase family. IleS type 1 subfamily. Monomer. Requires Zn(2+) as cofactor.

It localises to the cytoplasm. The catalysed reaction is tRNA(Ile) + L-isoleucine + ATP = L-isoleucyl-tRNA(Ile) + AMP + diphosphate. In terms of biological role, catalyzes the attachment of isoleucine to tRNA(Ile). As IleRS can inadvertently accommodate and process structurally similar amino acids such as valine, to avoid such errors it has two additional distinct tRNA(Ile)-dependent editing activities. One activity is designated as 'pretransfer' editing and involves the hydrolysis of activated Val-AMP. The other activity is designated 'posttransfer' editing and involves deacylation of mischarged Val-tRNA(Ile). The chain is Isoleucine--tRNA ligase from Pseudomonas putida (strain ATCC 47054 / DSM 6125 / CFBP 8728 / NCIMB 11950 / KT2440).